A 385-amino-acid chain; its full sequence is S-adenosylmethionine synthase (385 aa).

H16 contacts ATP. A Mg(2+)-binding site is contributed by D18. E44 contacts K(+). L-methionine-binding residues include E57 and Q100. Residues 100–110 (QSPDINQGVDR) form a flexible loop region. ATP is bound by residues 164-166 (DGK), 230-231 (KF), D239, 245-246 (RK), A262, and K266. An L-methionine-binding site is contributed by D239. Residue K270 participates in L-methionine binding.

This sequence belongs to the AdoMet synthase family. In terms of assembly, homotetramer; dimer of dimers. The cofactor is Mg(2+). K(+) is required as a cofactor.

It localises to the cytoplasm. The catalysed reaction is L-methionine + ATP + H2O = S-adenosyl-L-methionine + phosphate + diphosphate. Its pathway is amino-acid biosynthesis; S-adenosyl-L-methionine biosynthesis; S-adenosyl-L-methionine from L-methionine: step 1/1. Its function is as follows. Catalyzes the formation of S-adenosylmethionine (AdoMet) from methionine and ATP. The overall synthetic reaction is composed of two sequential steps, AdoMet formation and the subsequent tripolyphosphate hydrolysis which occurs prior to release of AdoMet from the enzyme. This is S-adenosylmethionine synthase from Helicobacter pylori (strain HPAG1).